We begin with the raw amino-acid sequence, 59 residues long: Small, acid-soluble spore protein H 2 (59 aa).

It belongs to the SspH family.

Its subcellular location is the spore core. This Bacillus cereus (strain ATCC 14579 / DSM 31 / CCUG 7414 / JCM 2152 / NBRC 15305 / NCIMB 9373 / NCTC 2599 / NRRL B-3711) protein is Small, acid-soluble spore protein H 2 (sspH2).